A 1784-amino-acid chain; its full sequence is Sodium channel protein type 4 subunit alpha B (1784 aa).

Residues 1–130 (MARLLPPTGT…RAAIRILIHS (130 aa)) are Cytoplasmic-facing. The segment at 29 to 48 (AEEAAEQERMKEQNVKVAEE) is disordered. The I repeat unit spans residues 112–429 (CLSPFNPVRR…VVAMAYAEQN (318 aa)). The helical transmembrane segment at 131 to 149 (LFSLVIMLTILTNCVFMAM) threads the bilayer. Residues 150 to 156 (SDPPGWS) lie on the Extracellular side of the membrane. The helical transmembrane segment at 157-177 (KILEYVFTGIYTFEAMVKVLS) threads the bilayer. Over 178 to 191 (RGFCIGDFTFLRDP) the chain is Cytoplasmic. Residues 192–209 (WNWLDFMVISMAYLTEFV) traverse the membrane as a helical segment. Over 210–215 (DLGNIS) the chain is Extracellular. The N-linked (GlcNAc...) asparagine glycan is linked to asparagine 213. The helical transmembrane segment at 216 to 232 (ALRTFRVLRALKTITVI) threads the bilayer. Residues 233–251 (PGLKTIVGALIQSVKKLAD) lie on the Cytoplasmic side of the membrane. A helical transmembrane segment spans residues 252 to 271 (VMILTVFCLSVFALIGLQLF). Over 272-366 (MGNLRQKCVL…PNYGYTSYDN (95 aa)) the chain is Extracellular. Cysteine 279 and cysteine 335 form a disulfide bridge. N-linked (GlcNAc...) asparagine glycosylation is found at asparagine 291, asparagine 304, and asparagine 337. An intrachain disulfide couples cysteine 344 to cysteine 350. Residues 367-391 (FGWAFLALFRLMTQDFWENLFQLTL) constitute an intramembrane region (pore-forming). At 392–398 (RAAGKTY) the chain is on the extracellular side. Residues 399–419 (MIFFVVIIFLGSFYLINLILA) traverse the membrane as a helical segment. Over 420-568 (VVAMAYAEQN…RIVYLFVMDP (149 aa)) the chain is Cytoplasmic. Residues 455–478 (EQKNGMVNGSKTSLSSKKKGDNDQ) are disordered. The stretch at 550–821 (CCIPWVKFKR…QIAISRITRG (272 aa)) is one II repeat. The chain crosses the membrane as a helical span at residues 569–587 (FVDLGITLCIVLNTVFMAM). Topologically, residues 588–598 (EHYPMSVHVEE) are extracellular. Residues 599-618 (VLAIGNLVFTGIFAAEMVLK) traverse the membrane as a helical segment. Over 619–632 (LIALDPYYYFQVGW) the chain is Cytoplasmic. The helical transmembrane segment at 633–652 (NIFDSIIVTMSLVELMLADV) threads the bilayer. Over 653–654 (EG) the chain is Extracellular. A helical transmembrane segment spans residues 655–672 (LSVLRSFRLMRVFKLAKS). The Cytoplasmic portion of the chain corresponds to 673 to 688 (WPTLNMLIKIIGNSVG). A helical transmembrane segment spans residues 689-707 (ALGNLTLVLAIIVFIFAVV). Topologically, residues 708-736 (GMQLFGKSYTDSVCKISSDCELPRWHMAD) are extracellular. Cysteine 721 and cysteine 727 are disulfide-bonded. The pore-forming intramembrane region spans 737 to 757 (FFHAFLIIFRVLCGEWIETMW). Over 758-768 (DCMEVAGQGMC) the chain is Extracellular. Cysteine 759 and cysteine 768 are disulfide-bonded. A helical membrane pass occupies residues 769–787 (IIVFMMVMVIGNLVVLNLF). The Cytoplasmic segment spans residues 788-973 (LALLLSSFSG…TCFAIVEHSY (186 aa)). Residues 870–928 (PIANGESDDDDGNGSSEDEDDEGRDINMKKKNGDESSTCSTVDKPPEVEDLVEEEEEDL) are disordered. The span at 875 to 892 (ESDDDDGNGSSEDEDDEG) shows a compositional bias: acidic residues. Residues 893–903 (RDINMKKKNGD) are compositionally biased toward basic and acidic residues. The span at 917–928 (VEDLVEEEEEDL) shows a compositional bias: acidic residues. The stretch at 954–1269 (KGKAWWNFRK…KKYYNAMKKL (316 aa)) is one III repeat. A helical transmembrane segment spans residues 974-991 (FETFIIFMILLSSGALAF). Over 992–1004 (EDIYIEQRRMIKI) the chain is Extracellular. Residues 1005-1023 (ILEYADQVFTYVFVVEMLL) traverse the membrane as a helical segment. Topologically, residues 1024-1037 (KWVAYGFKVYFTNA) are cytoplasmic. The chain crosses the membrane as a helical span at residues 1038–1056 (WCWLDFLIVDVSLISLTAN). Residues 1057–1064 (ILGYSELG) lie on the Extracellular side of the membrane. Residues 1065-1083 (AIKSLRTLRALRPLRALSR) form a helical membrane-spanning segment. Residues 1084 to 1101 (FEGMRVVVVNALVGAIPS) lie on the Cytoplasmic side of the membrane. A helical membrane pass occupies residues 1102–1121 (IFNVLLVCLIFWLIFSIMGV). Residues 1122–1173 (NLFAGKFYYCFNETSEEVFDHNVVNNKTDCYELMEFHPEVRWMNGKINFDNV) are Extracellular-facing. Residues cysteine 1131 and cysteine 1151 are joined by a disulfide bond. 2 N-linked (GlcNAc...) asparagine glycosylation sites follow: asparagine 1133 and asparagine 1147. The pore-forming intramembrane region spans 1174-1195 (GMGYLALLQVATFKGWMDIMYS). Residues 1196-1212 (AVDSRAIESQPVYEANL) are Extracellular-facing. Residues 1213–1234 (YMYIYFVIFIIFGSFFTLNLFI) traverse the membrane as a helical segment. The Cytoplasmic segment spans residues 1235 to 1297 (GVIIDNFNQQ…LVFDFVTQQF (63 aa)). An important for rapid channel inactivation region spans residues 1253–1255 (IFM). An IV repeat occupies 1278–1575 (IPRPTNCCQG…WEKFDPTASQ (298 aa)). The helical transmembrane segment at 1298–1315 (FDIFIMVMICLNMVTMMV) threads the bilayer. The Extracellular segment spans residues 1316-1326 (ETDDQSAEIEE). The chain crosses the membrane as a helical span at residues 1327 to 1345 (ILFYINFAFIILFTGECVL). At 1346 to 1357 (KITALRYHYFSI) the chain is on the cytoplasmic side. A helical membrane pass occupies residues 1358-1375 (GWNIFDFVVVILSILGIG). Residues 1376-1388 (LADLIEKYFVSPT) are Extracellular-facing. A helical transmembrane segment spans residues 1389–1405 (LFRVIRLARIGRVLRLI). At 1406–1424 (RGAKGIRTLLFALMMSLPA) the chain is on the cytoplasmic side. Residues 1425-1442 (LFNIGLLLFLIMFIFSIF) traverse the membrane as a helical segment. Topologically, residues 1443 to 1464 (GMSNFAYVKKEVGIDDMMNFET) are extracellular. Residues 1465 to 1487 (FGNSIICMFMITTSAGWDGLLAP) constitute an intramembrane region (pore-forming). Over 1488-1516 (ILNSPPDCDPDVDNPGSTTRGNCGNAAVG) the chain is Extracellular. Cysteine 1495 and cysteine 1510 are oxidised to a cystine. The helical transmembrane segment at 1517 to 1539 (IVFFCSYIVMSFLVVVNMYIAII) threads the bilayer. Residues 1540 to 1784 (LENFNVATEE…AADNLRESIV (245 aa)) are Cytoplasmic-facing. The IQ domain maps to 1669-1698 (EEVAASTIQRAYRSHILKRCVKQASYMYRD).

It belongs to the sodium channel (TC 1.A.1.10) family. Nav1.4/SCN4A subfamily. As to quaternary structure, voltage-gated sodium (Nav) channels consist of an ion-conducting alpha subunit which is functional on its own associated with regulatory beta subunits. Lacks the cysteine which covalently binds the conotoxin GVIIJ. This cysteine (position 719) is speculated in other sodium channel subunits alpha to be implied in covalent binding with the sodium channel subunit beta-2 or beta-4. Expressed in skeletal muscle, heart, brain, spinal cord, and eye.

It localises to the cell membrane. The catalysed reaction is Na(+)(in) = Na(+)(out). Functionally, pore-forming subunit of a voltage-gated sodium (Nav) channel that directly mediates the depolarizing phase of action potentials in excitable membranes. Navs, also called VGSCs (voltage-gated sodium channels) or VDSCs (voltage-dependent sodium channels), operate by switching between closed and open conformations depending on the voltage difference across the membrane. In the open conformation they allow Na(+) ions to selectively pass through the pore, along their electrochemical gradient. The influx of Na+ ions provokes membrane depolarization, initiating the propagation of electrical signals throughout cells and tissues. The polypeptide is Sodium channel protein type 4 subunit alpha B (scn4ab) (Danio rerio (Zebrafish)).